Consider the following 312-residue polypeptide: Transcriptional regulator protein Pur-beta (312 aa).

The segment at 1–32 is disordered; that stretch reads MADGDSGSERGGGGGPCGFQPASRGGGEQETQ. The residue at position 2 (alanine 2) is an N-acetylalanine. Serine 6 and serine 8 each carry phosphoserine. Arginine 24 carries the post-translational modification Omega-N-methylarginine. The tract at residues 28-254 is DNA-binding; it reads EQETQELASK…LRVSEVKPSY (227 aa). The residue at position 31 (threonine 31) is a Phosphothreonine. Serine 101 carries the post-translational modification Phosphoserine. Arginine 152 carries the post-translational modification Omega-N-methylarginine. Residue lysine 267 is modified to N6-acetyllysine. The span at 284–295 shows a compositional bias: basic and acidic residues; that stretch reads ERQRDKLYERRG. Positions 284–312 are disordered; that stretch reads ERQRDKLYERRGGGSGGGEESEGEEVDED. Omega-N-methylarginine is present on arginine 294. A phosphoserine mark is found at serine 298 and serine 304. A compositionally biased stretch (acidic residues) spans 302-312; the sequence is EESEGEEVDED.

It belongs to the PUR DNA-binding protein family. In terms of assembly, homodimer, heterodimer with PURA and heterotrimer with PURA and YBX1/Y-box protein 1. Interacts with MYOCD and SRF. As to expression, expressed in myocardium of heart failure patients.

It is found in the nucleus. Its function is as follows. Transcriptional regulator which can act as an activator or a repressor. Represses the transcription of ACTA2 in fibroblasts and smooth muscle cells via its ability to interact with the purine-rich strand of a MCAT- containing element in the 5' flanking region of the gene. Represses the transcription of MYOCD, capable of repressing all isoforms of MYOCD but the magnitude of the repressive effects is most notable for the SMC- specific isoforms. Promotes hepatic glucose production by activating the transcription of ADCY6, leading to cAMP accumulation, increased PKA activity, CREB activation, and increased transcription of PCK1 and G6PC genes. Has capacity to bind repeated elements in single-stranded DNA such as the purine-rich single strand of the PUR element located upstream of the MYC gene. Participates in transcriptional and translational regulation of alpha-MHC expression in cardiac myocytes by binding to the purine-rich negative regulatory (PNR) element Modulates constitutive liver galectin-3 gene transcription by binding to its promoter. May play a role in the dendritic transport of a subset of mRNAs. This chain is Transcriptional regulator protein Pur-beta (PURB), found in Homo sapiens (Human).